Consider the following 206-residue polypeptide: Dephospho-CoA kinase (206 aa).

Positions 4-200 (IVALTGGIGS…HRYLKLATAA (197 aa)) constitute a DPCK domain. Residue 12–17 (GSGKST) coordinates ATP.

The protein belongs to the CoaE family.

The protein localises to the cytoplasm. The enzyme catalyses 3'-dephospho-CoA + ATP = ADP + CoA + H(+). It participates in cofactor biosynthesis; coenzyme A biosynthesis; CoA from (R)-pantothenate: step 5/5. Its function is as follows. Catalyzes the phosphorylation of the 3'-hydroxyl group of dephosphocoenzyme A to form coenzyme A. The polypeptide is Dephospho-CoA kinase (Yersinia pestis).